The chain runs to 257 residues: Ribonuclease HII (257 aa).

The RNase H type-2 domain maps to 72–257 (TYIAGIDEVG…FAPIKDMIQK (186 aa)). A divalent metal cation-binding residues include D78, E79, and D170.

The protein belongs to the RNase HII family. The cofactor is Mn(2+). It depends on Mg(2+) as a cofactor.

The protein resides in the cytoplasm. The catalysed reaction is Endonucleolytic cleavage to 5'-phosphomonoester.. Functionally, endonuclease that specifically degrades the RNA of RNA-DNA hybrids. The sequence is that of Ribonuclease HII from Bacillus cereus (strain B4264).